A 96-amino-acid polypeptide reads, in one-letter code: DNA-binding protein HmvA (96 aa).

The interaction with DNA stretch occupies residues 52 to 55; the sequence is KTIK.

It belongs to the archaeal histone HMF family. In terms of assembly, homodimer. Dimers then assemble into higher oligomers, with the DNA wrapped around the protein core.

The protein resides in the cytoplasm. It is found in the chromosome. Its function is as follows. Binds and compact DNA (95 to 150 base pairs) to form nucleosome-like structures that contain positive DNA supercoils. Increases the resistance of DNA to thermal denaturation (in vitro). The chain is DNA-binding protein HmvA (hmvA) from Methanocaldococcus jannaschii (strain ATCC 43067 / DSM 2661 / JAL-1 / JCM 10045 / NBRC 100440) (Methanococcus jannaschii).